A 222-amino-acid chain; its full sequence is Cytidylate kinase (222 aa).

Position 10–18 (10–18 (GPAGAGKST)) interacts with ATP.

It belongs to the cytidylate kinase family. Type 1 subfamily.

It localises to the cytoplasm. It catalyses the reaction CMP + ATP = CDP + ADP. It carries out the reaction dCMP + ATP = dCDP + ADP. The polypeptide is Cytidylate kinase (Halalkalibacterium halodurans (strain ATCC BAA-125 / DSM 18197 / FERM 7344 / JCM 9153 / C-125) (Bacillus halodurans)).